Reading from the N-terminus, the 476-residue chain is Glutamate--tRNA ligase 1 (476 aa).

The short motif at 9–19 (PSPTGFLHIGG) is the 'HIGH' region element. Positions 238 to 242 (KLSKR) match the 'KMSKS' region motif. Lysine 241 provides a ligand contact to ATP.

Belongs to the class-I aminoacyl-tRNA synthetase family. Glutamate--tRNA ligase type 1 subfamily. In terms of assembly, monomer.

The protein resides in the cytoplasm. The enzyme catalyses tRNA(Glu) + L-glutamate + ATP = L-glutamyl-tRNA(Glu) + AMP + diphosphate. Its function is as follows. Catalyzes the attachment of glutamate to tRNA(Glu) in a two-step reaction: glutamate is first activated by ATP to form Glu-AMP and then transferred to the acceptor end of tRNA(Glu). This chain is Glutamate--tRNA ligase 1, found in Bartonella bacilliformis (strain ATCC 35685 / KC583 / Herrer 020/F12,63).